Consider the following 540-residue polypeptide: Phosphoenolpyruvate carboxykinase (ATP) (540 aa).

R65 lines the substrate pocket. Position 87 is an N6-acetyllysine (K87). 2 residues coordinate substrate: Y207 and K213. Residues K213, H232, and 248–256 (GLSGTGKTT) each bind ATP. The Mn(2+) site is built by K213 and H232. Position 269 (D269) interacts with Mn(2+). ATP-binding positions include E297, R333, 449–450 (RI), and T455. R333 provides a ligand contact to substrate. K523 carries the post-translational modification N6-acetyllysine.

It belongs to the phosphoenolpyruvate carboxykinase (ATP) family. As to quaternary structure, monomer. The cofactor is Mn(2+).

The protein localises to the cytoplasm. The catalysed reaction is oxaloacetate + ATP = phosphoenolpyruvate + ADP + CO2. Its pathway is carbohydrate biosynthesis; gluconeogenesis. Functionally, involved in the gluconeogenesis. Catalyzes the conversion of oxaloacetate (OAA) to phosphoenolpyruvate (PEP) through direct phosphoryl transfer between the nucleoside triphosphate and OAA. This Shigella flexneri serotype 5b (strain 8401) protein is Phosphoenolpyruvate carboxykinase (ATP).